The chain runs to 31 residues: Cytochrome b6-f complex subunit 6 (31 aa).

A helical membrane pass occupies residues 3–23 (ALIGYILLMTLMFSLAAGLYF).

Belongs to the PetL family. The 4 large subunits of the cytochrome b6-f complex are cytochrome b6, subunit IV (17 kDa polypeptide, PetD), cytochrome f and the Rieske protein, while the 4 small subunits are PetG, PetL, PetM and PetN. The complex functions as a dimer.

It is found in the plastid. The protein localises to the chloroplast thylakoid membrane. Functionally, component of the cytochrome b6-f complex, which mediates electron transfer between photosystem II (PSII) and photosystem I (PSI), cyclic electron flow around PSI, and state transitions. PetL is important for photoautotrophic growth as well as for electron transfer efficiency and stability of the cytochrome b6-f complex. This is Cytochrome b6-f complex subunit 6 from Emiliania huxleyi (Coccolithophore).